Consider the following 35-residue polypeptide: Cupiennin-1d (35 aa).

Glu-35 bears the Glutamic acid 1-amide mark.

It belongs to the cationic peptide 04 (cupiennin) family. 01 subfamily. Expressed by the venom gland.

It localises to the secreted. In terms of biological role, has antimicrobial activity against B.subtilis, E.coli, E.faecalis, P.aeruginosa, and S.aureus. Has insecticidal and hemolytic activities. Probably acts by disturbing membrane function with its amphipathic structure. This is Cupiennin-1d from Cupiennius salei (American wandering spider).